The primary structure comprises 604 residues: Glutamine--fructose-6-phosphate aminotransferase [isomerizing] (604 aa).

Catalysis depends on Cys2, which acts as the Nucleophile; for GATase activity. Residues 2–218 form the Glutamine amidotransferase type-2 domain; it reads CGIVGVVGNR…DKELVILTKD (217 aa). 2 consecutive SIS domains span residues 284-423 and 456-594; these read IITS…ANGK and VQAL…VDKP. Lys599 (for Fru-6P isomerization activity) is an active-site residue.

Homodimer.

The protein resides in the cytoplasm. It carries out the reaction D-fructose 6-phosphate + L-glutamine = D-glucosamine 6-phosphate + L-glutamate. Catalyzes the first step in hexosamine metabolism, converting fructose-6P into glucosamine-6P using glutamine as a nitrogen source. This is Glutamine--fructose-6-phosphate aminotransferase [isomerizing] from Streptococcus pyogenes serotype M18 (strain MGAS8232).